The sequence spans 631 residues: Peptidyl-prolyl cis-trans isomerase CYP71 (631 aa).

Residues 26 to 45 are disordered; the sequence is VEEEEPMVGPGPAPRGKRKR. WD repeat units follow at residues 68–106, 111–150, 201–240, and 257–297; these read MHRDVVTHVAVSAAEFFISGSMDGHLKFWKKKGVGIEFA, SHLGPIEGLAVSIDGLLCCTISNDHAVKIYDVVNYDMMAM, IHMNPIKVMKYNPVSDTMISGDTKGIIEYWSATTLQFPED, and KCKT…RRVY. The 155-residue stretch at 474–628 folds into the PPIase cyclophilin-type domain; it reads LPENVIMHTT…QDVKILNVTV (155 aa).

It belongs to the cyclophilin-type PPIase family. In terms of assembly, interacts with FAS1 and LHP1. Interacts (via WD repeat domain) with histone H3. Ubiquitous. Expressed in the meristems.

It is found in the nucleus. It catalyses the reaction [protein]-peptidylproline (omega=180) = [protein]-peptidylproline (omega=0). Its function is as follows. PPIases accelerate the folding of proteins. It catalyzes the cis-trans isomerization of proline imidic peptide bonds in oligopeptides. Histone proline isomerase that increases the rate of cis-trans isomerization of the synthetic histone H3 peptides H3P30 (RKSAP30F-p-nitroanilide) and H3P30K27me3 (RKme3-SAP30F-p-nitroanilide) in the histone H3 N-terminal tail, in vitro. Histone remodeling factor involved in chromatin-based gene silencing. Reinforces H3K27 methylation. Involved in fundamental processes of chromatin assembly and histone modification by mediating the targeting of FAS1 and LHP1 on the chromatin. Required for the formation and development of leaves, for normal phyllotaxy and for the formation, maintenance and activity of root and shoot apical meristems. This chain is Peptidyl-prolyl cis-trans isomerase CYP71, found in Arabidopsis thaliana (Mouse-ear cress).